Here is a 133-residue protein sequence, read N- to C-terminus: Small ribosomal subunit protein uS11 (133 aa).

The tract at residues 114–133 (VTPIPHDGTRPPGGKRGRRV) is disordered.

It belongs to the universal ribosomal protein uS11 family. As to quaternary structure, part of the 30S ribosomal subunit.

In terms of biological role, located on the platform of the 30S subunit. This is Small ribosomal subunit protein uS11 from Archaeoglobus fulgidus (strain ATCC 49558 / DSM 4304 / JCM 9628 / NBRC 100126 / VC-16).